A 265-amino-acid chain; its full sequence is Cytochrome c oxidase subunit 3 (265 aa).

Helical transmembrane passes span 16–36 (PWPISGSLGALATTVGGVMYM), 41–61 (GGATLLSLGLIFLLYTMFVWW), 84–104 (YGSILFIVSEVMSFFLFFWAS), 162–182 (AVYALVATVLLALVSTGFQGM), 200–220 (FLLATGFHGFHVIIGTLFLIV), and 242–262 (AWYWHFVDVVRLFPFVSIYWW).

Belongs to the cytochrome c oxidase subunit 3 family. In terms of assembly, component of the cytochrome c oxidase (complex IV, CIV), a multisubunit enzyme composed of a catalytic core of 3 subunits and several supernumerary subunits. The complex exists as a monomer or a dimer and forms supercomplexes (SCs) in the inner mitochondrial membrane with ubiquinol-cytochrome c oxidoreductase (cytochrome b-c1 complex, complex III, CIII).

It localises to the mitochondrion inner membrane. The enzyme catalyses 4 Fe(II)-[cytochrome c] + O2 + 8 H(+)(in) = 4 Fe(III)-[cytochrome c] + 2 H2O + 4 H(+)(out). Functionally, component of the cytochrome c oxidase, the last enzyme in the mitochondrial electron transport chain which drives oxidative phosphorylation. The respiratory chain contains 3 multisubunit complexes succinate dehydrogenase (complex II, CII), ubiquinol-cytochrome c oxidoreductase (cytochrome b-c1 complex, complex III, CIII) and cytochrome c oxidase (complex IV, CIV), that cooperate to transfer electrons derived from NADH and succinate to molecular oxygen, creating an electrochemical gradient over the inner membrane that drives transmembrane transport and the ATP synthase. Cytochrome c oxidase is the component of the respiratory chain that catalyzes the reduction of oxygen to water. Electrons originating from reduced cytochrome c in the intermembrane space (IMS) are transferred via the dinuclear copper A center (CU(A)) of subunit 2 and heme A of subunit 1 to the active site in subunit 1, a binuclear center (BNC) formed by heme A3 and copper B (CU(B)). The BNC reduces molecular oxygen to 2 water molecules using 4 electrons from cytochrome c in the IMS and 4 protons from the mitochondrial matrix. The chain is Cytochrome c oxidase subunit 3 (COX3) from Zea mays (Maize).